A 49-amino-acid chain; its full sequence is Large ribosomal subunit protein bL33 (49 aa).

Belongs to the bacterial ribosomal protein bL33 family.

The chain is Large ribosomal subunit protein bL33 from Clostridium botulinum (strain ATCC 19397 / Type A).